We begin with the raw amino-acid sequence, 68 residues long: DNA-directed RNA polymerase subunit Rpo10 (68 aa).

Zn(2+) contacts are provided by cysteine 7, cysteine 10, cysteine 44, and cysteine 45.

The protein belongs to the archaeal Rpo10/eukaryotic RPB10 RNA polymerase subunit family. As to quaternary structure, part of the RNA polymerase complex. It depends on Zn(2+) as a cofactor.

Its subcellular location is the cytoplasm. It catalyses the reaction RNA(n) + a ribonucleoside 5'-triphosphate = RNA(n+1) + diphosphate. Functionally, DNA-dependent RNA polymerase (RNAP) catalyzes the transcription of DNA into RNA using the four ribonucleoside triphosphates as substrates. The chain is DNA-directed RNA polymerase subunit Rpo10 from Methanococcus maripaludis (strain C5 / ATCC BAA-1333).